The primary structure comprises 389 residues: Krueppel-like factor 17 (389 aa).

Disordered stretches follow at residues 1–48 (MYGR…SGVH) and 239–279 (LVSQ…GSSE). Polar residues predominate over residues 26–38 (AQDNENSAPILNM). Residues 264–278 (KNSRPQEGTGRRGSS) are compositionally biased toward basic and acidic residues. 3 C2H2-type zinc fingers span residues 283-307 (YCCN…QRKH), 313-337 (YSCN…MRVH), and 343-365 (YKCD…QKTH). A disordered region spans residues 356 to 389 (DHLKQHQKTHRPGPSDPQANNNNGEQDSPPAAGP). Residues 372–381 (PQANNNNGEQ) are compositionally biased toward polar residues.

This sequence belongs to the Sp1 C2H2-type zinc-finger protein family.

Its subcellular location is the nucleus. Its function is as follows. Transcription repressor that binds to the promoter of target genes and prevents their expression. Acts as a negative regulator of epithelial-mesenchymal transition and metastasis in breast cancer. Specifically binds the 5'-CACCC-3' sequence in the promoter of ID1, a key metastasis regulator in breast cancer, and repress its expression. May be a germ cell-specific transcription factor that plays important roles in spermatid differentiation and oocyte development. The chain is Krueppel-like factor 17 (KLF17) from Homo sapiens (Human).